A 197-amino-acid chain; its full sequence is Probable GTP-binding protein EngB (197 aa).

Residues 26–197 (ELPEIALAGR…EAWDAILEKL (172 aa)) enclose the EngB-type G domain. GTP contacts are provided by residues 34–41 (GRSNVGKS), 61–65 (GKTQL), 79–82 (DVPG), 146–149 (TKAD), and 178–180 (FSS). Ser-41 and Thr-63 together coordinate Mg(2+).

It belongs to the TRAFAC class TrmE-Era-EngA-EngB-Septin-like GTPase superfamily. EngB GTPase family. Mg(2+) is required as a cofactor.

Its function is as follows. Necessary for normal cell division and for the maintenance of normal septation. This Streptococcus pneumoniae (strain CGSP14) protein is Probable GTP-binding protein EngB.